The primary structure comprises 354 residues: Cytoplasmic tRNA 2-thiolation protein 1 (354 aa).

It belongs to the TtcA family. CTU1/NCS6/ATPBD3 subfamily.

The protein localises to the cytoplasm. It participates in tRNA modification; 5-methoxycarbonylmethyl-2-thiouridine-tRNA biosynthesis. Its function is as follows. Plays a central role in 2-thiolation of mcm(5)S(2)U at tRNA wobble positions of tRNA(Lys), tRNA(Glu) and tRNA(Gln). Directly binds tRNAs and probably acts by catalyzing adenylation of tRNAs, an intermediate required for 2-thiolation. It is unclear whether it acts as a sulfurtransferase that transfers sulfur from thiocarboxylated URM1 onto the uridine of tRNAs at wobble position. Prior mcm(5) tRNA modification by the elongator complex is required for 2-thiolation. May also be involved in protein urmylation. In Laccaria bicolor (strain S238N-H82 / ATCC MYA-4686) (Bicoloured deceiver), this protein is Cytoplasmic tRNA 2-thiolation protein 1.